The following is a 387-amino-acid chain: ERBB-3 BINDING PROTEIN 1 (387 aa).

2 necessary for nucleolar localization regions span residues 1–49 (MSDD…IVDL) and 297–387 (LLQP…PMEG). The segment at 47–55 (VDLCEKGDA) is RNA-binding. The segment at 337 to 387 (LQPTKTTENEPEIKAWLALPTKTKKKGGGKKKKGKKGDKVEEASQAEPMEG) is disordered. Residues 356-373 (PTKTKKKGGGKKKKGKKG) form an interaction with RNA region. Residues 358–372 (KTKKKGGGKKKKGKK) are compositionally biased toward basic residues. The Nuclear localization signal signature appears at 360–369 (KKKGGGKKKK).

The protein belongs to the peptidase M24 family. As to quaternary structure, component of a ribonucleoprotein complex. Expressed during tuberisation and in roots, nodes, internodes, petioles, leaves, stolons, tubers and sprouts.

Its subcellular location is the nucleus. In terms of biological role, binds RNA. Associates with 28S, 18S and 5.8S mature rRNAs, several rRNA precursors and probably U3 small nucleolar RNA. May be involved in regulation of intermediate and late steps of rRNA processing. May be involved in ribosome assembly. Required for expression of cell cycle genes such as CYCD3-1, RNR2A and CDKB1-1. Promotes, in a dose- and auxin-dependent manner, organ growth by stimulating both cell proliferation and expansion, via the regulation of RBR1 levels. This chain is ERBB-3 BINDING PROTEIN 1, found in Solanum tuberosum (Potato).